The chain runs to 343 residues: N-acetyl-gamma-glutamyl-phosphate reductase (343 aa).

Residue Cys-149 is part of the active site.

This sequence belongs to the NAGSA dehydrogenase family. Type 1 subfamily.

The protein resides in the cytoplasm. The catalysed reaction is N-acetyl-L-glutamate 5-semialdehyde + phosphate + NADP(+) = N-acetyl-L-glutamyl 5-phosphate + NADPH + H(+). It functions in the pathway amino-acid biosynthesis; L-arginine biosynthesis; N(2)-acetyl-L-ornithine from L-glutamate: step 3/4. Its function is as follows. Catalyzes the NADPH-dependent reduction of N-acetyl-5-glutamyl phosphate to yield N-acetyl-L-glutamate 5-semialdehyde. The protein is N-acetyl-gamma-glutamyl-phosphate reductase of Methanococcus maripaludis (strain C6 / ATCC BAA-1332).